The sequence spans 118 residues: Small ribosomal subunit protein uS13 (118 aa).

The interval R93 to K118 is disordered.

This sequence belongs to the universal ribosomal protein uS13 family. In terms of assembly, part of the 30S ribosomal subunit. Forms a loose heterodimer with protein S19. Forms two bridges to the 50S subunit in the 70S ribosome.

In terms of biological role, located at the top of the head of the 30S subunit, it contacts several helices of the 16S rRNA. In the 70S ribosome it contacts the 23S rRNA (bridge B1a) and protein L5 of the 50S subunit (bridge B1b), connecting the 2 subunits; these bridges are implicated in subunit movement. Contacts the tRNAs in the A and P-sites. This is Small ribosomal subunit protein uS13 from Teredinibacter turnerae (strain ATCC 39867 / T7901).